Consider the following 78-residue polypeptide: Large ribosomal subunit protein eL38 (78 aa).

The protein belongs to the eukaryotic ribosomal protein eL38 family. Component of the large ribosomal subunit. Mature ribosomes consist of a small (40S) and a large (60S) subunit. The 40S subunit contains about 32 different proteins and 1 molecule of RNA (18S). The 60S subunit contains 45 different proteins and 3 molecules of RNA (25S, 5.8S and 5S).

The protein localises to the cytoplasm. Component of the ribosome, a large ribonucleoprotein complex responsible for the synthesis of proteins in the cell. The small ribosomal subunit (SSU) binds messenger RNAs (mRNAs) and translates the encoded message by selecting cognate aminoacyl-transfer RNA (tRNA) molecules. The large subunit (LSU) contains the ribosomal catalytic site termed the peptidyl transferase center (PTC), which catalyzes the formation of peptide bonds, thereby polymerizing the amino acids delivered by tRNAs into a polypeptide chain. The nascent polypeptides leave the ribosome through a tunnel in the LSU and interact with protein factors that function in enzymatic processing, targeting, and the membrane insertion of nascent chains at the exit of the ribosomal tunnel. The protein is Large ribosomal subunit protein eL38 of Candida albicans (strain SC5314 / ATCC MYA-2876) (Yeast).